The chain runs to 513 residues: ATP synthase subunit alpha 2 (513 aa).

169 to 176 (GDRQTGKT) contributes to the ATP binding site.

The protein belongs to the ATPase alpha/beta chains family. As to quaternary structure, F-type ATPases have 2 components, CF(1) - the catalytic core - and CF(0) - the membrane proton channel. CF(1) has five subunits: alpha(3), beta(3), gamma(1), delta(1), epsilon(1). CF(0) has three main subunits: a(1), b(2) and c(9-12). The alpha and beta chains form an alternating ring which encloses part of the gamma chain. CF(1) is attached to CF(0) by a central stalk formed by the gamma and epsilon chains, while a peripheral stalk is formed by the delta and b chains.

The protein resides in the cell inner membrane. It catalyses the reaction ATP + H2O + 4 H(+)(in) = ADP + phosphate + 5 H(+)(out). Produces ATP from ADP in the presence of a proton gradient across the membrane. The alpha chain is a regulatory subunit. This Pseudoalteromonas atlantica (strain T6c / ATCC BAA-1087) protein is ATP synthase subunit alpha 2.